A 926-amino-acid chain; its full sequence is MSRFFATGSDSESESSLSGDEILPKPVGGTFGKQPIILSDDEEDTKRVVRSAKDKRFEELTNLIKTIRNAMKIRDMTKCLEEFELLVKAFIKAKNIVDKEGVPRFYIRLLSDLDDYLNELWEDKEGKKKMNKNNAKALSTLRQKLRKYNRDFEASITAYKQNPEESADEDQEKDEDSEASSSSDDDSDEGMSASKFLKKAESAPPESRSKFLKKEEAEDEAESSEDEDWGSDSDESDSDESDDENKHASMASRFLKKTVTEGDRQAVEKKKEDKAKKKQHRKVKRKDEEGEEGEEDDNEGGGEWEKVKGGVPLVKEKPKMFAKGTEITPPIVVKKLNEILLARGKKGTDRAAQIELLQLLAGIAEENNLGQGIAVKIKFNIMASLYDYNTNLATYMKSDMWKKCLDCIHDLLDILFANSNMFIGEHIVEDSENLSNLEQPLRVRGCILTLIERMEEEFTKIMQNTDPHSQEYVDNLKDEARVCEVIERAQKYLQEKGSTEEICRVYLRRIMHTYYKFDYKAHQRQLSTEQESKSEQDQAENEAEDSAILMDRLCKYIYAKDRTDRIRTCAILCHIYHHALHNRWFQARDLMLMSHLQDNIQHADPPVQILYNRTMVQLGICAFRQGMIRDAHNALLDIQSSGRAKELLGQGLLMRTMQERNQEQEKIEKRRQIPFHMHINLELLECVYLVSAMLLEIPYMAAHEFDARRRMISKQFHHQLRVGERQPLLGPPESMREHVVAASKAMKMGDWKTCKNFIINEKMNGKVWDLFPEAERVRGMLVRKIQEESLRTYLFTYSSVYDSIRMGILGDMFQLEIPTVHSIISKMIINEELMASLDQPTQTVVMHGTEPSSLQNTALQLAEKLGNLVENNERIFDHKQGSYGGYFNRGDRGDRGDRDQKDQYQRKEGGYMRRGYRRDQQGQSNY.

2 disordered regions span residues 1–36 (MSRFFATGSDSESESSLSGDEILPKPVGGTFGKQPI) and 158–309 (AYKQ…KVKG). Low complexity predominate over residues 8–21 (GSDSESESSLSGDE). The segment covering 165-189 (ESADEDQEKDEDSEASSSSDDDSDE) has biased composition (acidic residues). Residues 207–216 (SRSKFLKKEE) show a composition bias toward basic and acidic residues. Positions 217-243 (AEDEAESSEDEDWGSDSDESDSDESDD) are enriched in acidic residues. Over residues 258 to 275 (TVTEGDRQAVEKKKEDKA) the composition is skewed to basic and acidic residues. Residues 289–302 (EGEEGEEDDNEGGG) are compositionally biased toward acidic residues. The 177-residue stretch at 675–851 (FHMHINLELL…QTVVMHGTEP (177 aa)) folds into the PCI domain. Residues 880 to 926 (QGSYGGYFNRGDRGDRGDRDQKDQYQRKEGGYMRRGYRRDQQGQSNY) are disordered. The span at 889 to 911 (RGDRGDRGDRDQKDQYQRKEGGY) shows a compositional bias: basic and acidic residues.

The protein belongs to the eIF-3 subunit C family. Component of the eukaryotic translation initiation factor 3 (eIF-3) complex, which is composed of 13 subunits: eif3a, eif3b, eif3c, eif3d, eif3e, eif3f, eif3g, eif3h, eif3i, eif3j, eif3k, eif3l and eif3m.

It is found in the cytoplasm. Component of the eukaryotic translation initiation factor 3 (eIF-3) complex, which is involved in protein synthesis of a specialized repertoire of mRNAs and, together with other initiation factors, stimulates binding of mRNA and methionyl-tRNAi to the 40S ribosome. The eIF-3 complex specifically targets and initiates translation of a subset of mRNAs involved in cell proliferation. The protein is Eukaryotic translation initiation factor 3 subunit C (eif3c) of Xenopus laevis (African clawed frog).